The primary structure comprises 225 residues: MSLPEPLLRAGWPRERLLRHGAATLSDPELLALALRTGVAGCNAVQLGHDLLRRFGGLRGLLGTSPAELQVVPGLGTAKACVLAAVLELARRTLEEDLVRQDALANPDLVRRYCQAALGHRKVEHCIALYLDARLKLIICAEVARGTLTQAQIYPREIVREALRHHAAALILAHNHPGGTAAASAADIAMTRQIRQALALVDVRLIDHVIVAGAATVSMAAQGHL.

One can recognise an MPN domain in the interval 103-225 (ALANPDLVRR…TVSMAAQGHL (123 aa)). Positions 174, 176, and 187 each coordinate Zn(2+). The JAMM motif signature appears at 174-187 (HNHPGGTAAASAAD).

This sequence belongs to the UPF0758 family.

This Bordetella parapertussis (strain 12822 / ATCC BAA-587 / NCTC 13253) protein is UPF0758 protein BPP1850.